We begin with the raw amino-acid sequence, 314 residues long: Putative S-adenosyl-L-methionine-dependent methyltransferase MMAR_5323 (314 aa).

S-adenosyl-L-methionine-binding positions include Asp-132 and 161–162; that span reads DL.

Belongs to the UPF0677 family.

In terms of biological role, exhibits S-adenosyl-L-methionine-dependent methyltransferase activity. This chain is Putative S-adenosyl-L-methionine-dependent methyltransferase MMAR_5323, found in Mycobacterium marinum (strain ATCC BAA-535 / M).